The primary structure comprises 83 residues: High-potential iron-sulfur protein (83 aa).

Residues C43, C46, C61, and C75 each contribute to the [4Fe-4S] cluster site.

The protein belongs to the high-potential iron-sulfur protein (HiPIP) family. In terms of assembly, homodimer.

Its subcellular location is the periplasm. Specific class of high-redox-potential 4Fe-4S ferredoxins. Functions in anaerobic electron transport in most purple and in some other photosynthetic bacteria and in at least one genus (Paracoccus) of halophilic, denitrifying bacteria. The sequence is that of High-potential iron-sulfur protein from Isochromatium buderi (Chromatium buderi).